A 266-amino-acid polypeptide reads, in one-letter code: Undecaprenyl-diphosphatase (266 aa).

8 helical membrane-spanning segments follow: residues methionine 1–isoleucine 21, glutamine 39–phenylalanine 59, tryptophan 87–isoleucine 107, alanine 111–alanine 131, leucine 150–threonine 172, phenylalanine 187–leucine 207, alanine 218–leucine 238, and isoleucine 244–valine 264.

Belongs to the UppP family.

The protein resides in the cell inner membrane. It catalyses the reaction di-trans,octa-cis-undecaprenyl diphosphate + H2O = di-trans,octa-cis-undecaprenyl phosphate + phosphate + H(+). In terms of biological role, catalyzes the dephosphorylation of undecaprenyl diphosphate (UPP). Confers resistance to bacitracin. This is Undecaprenyl-diphosphatase from Pseudoalteromonas atlantica (strain T6c / ATCC BAA-1087).